Reading from the N-terminus, the 421-residue chain is Gamma-glutamyl phosphate reductase (421 aa).

This sequence belongs to the gamma-glutamyl phosphate reductase family.

It localises to the cytoplasm. The enzyme catalyses L-glutamate 5-semialdehyde + phosphate + NADP(+) = L-glutamyl 5-phosphate + NADPH + H(+). The protein operates within amino-acid biosynthesis; L-proline biosynthesis; L-glutamate 5-semialdehyde from L-glutamate: step 2/2. Functionally, catalyzes the NADPH-dependent reduction of L-glutamate 5-phosphate into L-glutamate 5-semialdehyde and phosphate. The product spontaneously undergoes cyclization to form 1-pyrroline-5-carboxylate. In Erythrobacter litoralis (strain HTCC2594), this protein is Gamma-glutamyl phosphate reductase.